The sequence spans 176 residues: MLDLGLSKMALIGVVALVVLGPERLPRVARTAGALFGRAQRYINDVKSEVSREIELDALRTMKTDFESAARNVETTIHDNLREHEKELNDTWHSAVGGLNEGSVDAGTYGSDTPAAPSWRGSTAALARKRRNWRVKQAAMPVWYKRATTRRTHVQSGAARVARHQPASLRRPTRFL.

A helical membrane pass occupies residues 1–21; the sequence is MLDLGLSKMALIGVVALVVLG. Residues 155 to 176 are disordered; it reads QSGAARVARHQPASLRRPTRFL.

This sequence belongs to the TatB family. The Tat system comprises two distinct complexes: a TatABC complex, containing multiple copies of TatA, TatB and TatC subunits, and a separate TatA complex, containing only TatA subunits. Substrates initially bind to the TatABC complex, which probably triggers association of the separate TatA complex to form the active translocon.

Its subcellular location is the cell inner membrane. Its function is as follows. Part of the twin-arginine translocation (Tat) system that transports large folded proteins containing a characteristic twin-arginine motif in their signal peptide across membranes. Together with TatC, TatB is part of a receptor directly interacting with Tat signal peptides. TatB may form an oligomeric binding site that transiently accommodates folded Tat precursor proteins before their translocation. The chain is Sec-independent protein translocase protein TatB from Burkholderia ambifaria (strain ATCC BAA-244 / DSM 16087 / CCUG 44356 / LMG 19182 / AMMD) (Burkholderia cepacia (strain AMMD)).